Consider the following 24-residue polypeptide: Chaperonin GroEL (24 aa).

This sequence belongs to the chaperonin (HSP60) family. Forms a cylinder of 14 subunits composed of two heptameric rings stacked back-to-back. Interacts with the co-chaperonin GroES.

Its subcellular location is the cytoplasm. The enzyme catalyses ATP + H2O + a folded polypeptide = ADP + phosphate + an unfolded polypeptide.. Its function is as follows. Together with its co-chaperonin GroES, plays an essential role in assisting protein folding. The GroEL-GroES system forms a nano-cage that allows encapsulation of the non-native substrate proteins and provides a physical environment optimized to promote and accelerate protein folding. The chain is Chaperonin GroEL from Acinetobacter calcoaceticus.